A 160-amino-acid chain; its full sequence is Type IV major fimbrial protein FimA (160 aa).

The propeptide at 1-7 (MKSLQKG) is leader sequence. F8 carries the post-translational modification N-methylphenylalanine. A helical transmembrane segment spans residues 8–28 (FTLIELMIVVAIIGILAAFAI). A disulfide bridge connects residues C63 and C105.

The protein belongs to the N-Me-Phe pilin family. The pili are polar flexible filaments of about 5.4 nanometers diameter and 2.5 micrometers average length; they consist of only a single polypeptide chain arranged in a helical configuration of five subunits per turn in the assembled pilus.

Its subcellular location is the fimbrium. The protein localises to the membrane. In terms of biological role, major component of the type IV fimbriae that plays an essential role in twitching motility, natural transformation, and protease secretion. The polypeptide is Type IV major fimbrial protein FimA (fimA) (Dichelobacter nodosus (Bacteroides nodosus)).